We begin with the raw amino-acid sequence, 1671 residues long: Hybrid signal transduction protein dokA (1671 aa).

Over residues 1–10 (MSSPHIELHS) the composition is skewed to basic and acidic residues. Disordered regions lie at residues 1–27 (MSSPHIELHSQRTLSPQPSSNNFELTG), 42–89 (DDLN…DKND), 126–241 (QQQQ…RRSS), 365–451 (YSNN…NNEE), 579–603 (HNHNHHNHNHNNTTQRASSTDSPFI), and 629–651 (SNSSSNSNNNSNNASSSNCSSNA). Residues 11–27 (QRTLSPQPSSNNFELTG) show a composition bias toward polar residues. Low complexity-rich tracts occupy residues 45–83 (NNNNNNNNNNNNNNNNNNNNNNNNNNNNNNNNNNNNNNN) and 126–167 (QQQQ…QQQE). The span at 168–179 (QEQEQEQEQEQE) shows a compositional bias: acidic residues. Over residues 367–449 (NNNNNTNTNN…NNNNNNNNNN (83 aa)) the composition is skewed to low complexity. The segment covering 591–600 (TTQRASSTDS) has biased composition (polar residues). A Histidine kinase domain is found at 1050–1276 (NISHELRTPC…TFWFAIKVSI (227 aa)). The region spanning 1519-1633 (YILVAEDNDI…RLQKTLSDWI (115 aa)) is the Response regulatory domain.

Post-translationally, under osmotic stress conditions, this protein undergoes phosphorylation at a serine residue in the kinase core, which is not due to an autophosphorylation of dokA. This is in contrast to the classic two-component paradigm, which predicts only histidine and aspartate phosphorylation.

In terms of biological role, part of the osmoregulatory pathway which leads to the increase of intracellular cAMP concentration in response to hyperosmotic stress. Thought to negatively regulate the rdeA-regA pathway by acting as a phosphatase towards the HPt protein rdeA. Has probably no histidine kinase activity. This chain is Hybrid signal transduction protein dokA (dokA), found in Dictyostelium discoideum (Social amoeba).